A 401-amino-acid chain; its full sequence is Tyrosine--tRNA ligase (401 aa).

The 'HIGH' region signature appears at 42–51 (PTAPDIHLGH). A 'KMSKS' region motif is present at residues 226–230 (KMSKS). Lysine 229 contacts ATP. An S4 RNA-binding domain is found at 334–394 (MGLATLLKEA…GKRKFARVRL (61 aa)).

The protein belongs to the class-I aminoacyl-tRNA synthetase family. TyrS type 2 subfamily. In terms of assembly, homodimer.

The protein resides in the cytoplasm. The catalysed reaction is tRNA(Tyr) + L-tyrosine + ATP = L-tyrosyl-tRNA(Tyr) + AMP + diphosphate + H(+). In terms of biological role, catalyzes the attachment of tyrosine to tRNA(Tyr) in a two-step reaction: tyrosine is first activated by ATP to form Tyr-AMP and then transferred to the acceptor end of tRNA(Tyr). The sequence is that of Tyrosine--tRNA ligase from Haemophilus influenzae (strain ATCC 51907 / DSM 11121 / KW20 / Rd).